The primary structure comprises 304 residues: GTPase Era (304 aa).

In terms of domain architecture, Era-type G spans 9 to 177 (HSGFVAIVGR…VTTLSQHMPE (169 aa)). Residues 17–24 (GRPNVGKS) are G1. A GTP-binding site is contributed by 17-24 (GRPNVGKS). The tract at residues 43 to 47 (QTTRN) is G2. The interval 64-67 (DTPG) is G3. Residues 64–68 (DTPGI) and 127–130 (NKID) each bind GTP. Residues 127–130 (NKID) form a G4 region. The tract at residues 156–158 (ISA) is G5. In terms of domain architecture, KH type-2 spans 208-285 (TRQEVPHSVA…YLELWVKVSE (78 aa)).

This sequence belongs to the TRAFAC class TrmE-Era-EngA-EngB-Septin-like GTPase superfamily. Era GTPase family. As to quaternary structure, monomer.

It localises to the cytoplasm. The protein resides in the cell membrane. An essential GTPase that binds both GDP and GTP, with rapid nucleotide exchange. Plays a role in 16S rRNA processing and 30S ribosomal subunit biogenesis and possibly also in cell cycle regulation and energy metabolism. In Pediococcus pentosaceus (strain ATCC 25745 / CCUG 21536 / LMG 10740 / 183-1w), this protein is GTPase Era.